The chain runs to 250 residues: Endonuclease NucS 2 (250 aa).

The protein belongs to the NucS endonuclease family.

Its subcellular location is the cytoplasm. Cleaves both 3' and 5' ssDNA extremities of branched DNA structures. The chain is Endonuclease NucS 2 from Halobacterium salinarum (strain ATCC 700922 / JCM 11081 / NRC-1) (Halobacterium halobium).